Consider the following 146-residue polypeptide: Leghemoglobin Lb120-1 (146 aa).

One can recognise a Globin domain in the interval 2-146 (GFTEKQEALV…LASAIKKAMN (145 aa)). Tyrosine 24 and tyrosine 29 each carry nitrated tyrosine. Serine 44 contributes to the heme b binding site. Residue serine 44 is modified to Phosphoserine. Histidine 61 provides a ligand contact to O2. Heme b-binding residues include lysine 64, histidine 93, and lysine 96. At tyrosine 134 the chain carries Nitrated tyrosine.

It belongs to the plant globin family. As to quaternary structure, monomer. Post-translationally, nitrated in effective nodules and particularly in hypoxic conditions; this mechanism may play a protective role in the symbiosis by buffering toxic peroxynitrite NO(2)(-). Nitration level decrease during nodule senescence. In terms of processing, phosphorylation at Ser-44 disrupts the molecular environment of its porphyrin ring oxygen binding pocket, thus leading to a reduced oxygen consumption and to the delivery of oxygen O(2) to symbiosomes. As to expression, root nodules.

It is found in the cytoplasm. The protein resides in the cytosol. It localises to the nucleus. Functionally, leghemoglobin that reversibly binds oxygen O(2) through a pentacoordinated heme iron. In root nodules, facilitates the diffusion of oxygen to the bacteroids while preventing the bacterial nitrogenase from being inactivated by buffering dioxygen, nitric oxide and carbon monoxide, and promoting the formation of reactive oxygen species (ROS, e.g. H(2)O(2)). This role is essential for symbiotic nitrogen fixation (SNF). The polypeptide is Leghemoglobin Lb120-1 (Pisum sativum (Garden pea)).